We begin with the raw amino-acid sequence, 215 residues long: Cytochrome b6 (215 aa).

Residues 32-52 (IFYCFGGITLTCFLIQVATGF) form a helical membrane-spanning segment. C35 is a binding site for heme c. Heme b-binding residues include H86 and H100. Transmembrane regions (helical) follow at residues 90 to 110 (ASMM…TGGF), 116 to 136 (LTWV…VTGY), and 186 to 206 (LHTF…FLMI). 2 residues coordinate heme b: H187 and H202.

Belongs to the cytochrome b family. PetB subfamily. The 4 large subunits of the cytochrome b6-f complex are cytochrome b6, subunit IV (17 kDa polypeptide, PetD), cytochrome f and the Rieske protein, while the 4 small subunits are PetG, PetL, PetM and PetN. The complex functions as a dimer. It depends on heme b as a cofactor. Requires heme c as cofactor.

It localises to the plastid. The protein resides in the chloroplast thylakoid membrane. Component of the cytochrome b6-f complex, which mediates electron transfer between photosystem II (PSII) and photosystem I (PSI), cyclic electron flow around PSI, and state transitions. The polypeptide is Cytochrome b6 (Nephroselmis olivacea (Green alga)).